A 1093-amino-acid polypeptide reads, in one-letter code: Semaphorin-5B (1093 aa).

Residues 1 to 19 form the signal peptide; that stretch reads MVVPGPLALSLLLSSLTLL. The Extracellular portion of the chain corresponds to 20-978; that stretch reads VSHLSSSQDI…TSCGGFNLIH (959 aa). A Sema domain is found at 45–495; it reads HPIVAFEDLK…LSDRVLRVPL (451 aa). N-linked (GlcNAc...) asparagine glycosylation is found at Asn59 and Asn95. 2 cysteine pairs are disulfide-bonded: Cys114–Cys124 and Cys141–Cys150. Asn157, Asn178, and Asn287 each carry an N-linked (GlcNAc...) asparagine glycan. Cystine bridges form between Cys264/Cys367 and Cys288/Cys330. Asn333, Asn378, Asn532, Asn539, Asn547, and Asn602 each carry an N-linked (GlcNAc...) asparagine glycan. TSP type-1 domains lie at 551–605, 606–662, 664–713, 721–776, 795–850, 852–907, and 908–952; these read DGGF…NCSR, NGAW…TPCP, PIFW…EACP, WTPW…ACDT, NGGW…QACP, RGAW…QACP, and EGWS…RPCP. 6 disulfide bridges follow: Cys618–Cys655, Cys622–Cys661, Cys633–Cys645, Cys676–Cys707, Cys680–Cys712, and Cys691–Cys697. Asn728 is a glycosylation site (N-linked (GlcNAc...) asparagine). 6 disulfide bridges follow: Cys807/Cys844, Cys811/Cys849, Cys822/Cys834, Cys864/Cys901, Cys868/Cys906, and Cys879/Cys891. A glycan (N-linked (GlcNAc...) asparagine) is linked at Asn944. Residues 979–999 traverse the membrane as a helical segment; the sequence is LIVTGVSCFLVSGLLTLAVYL. Residues 1000-1093 are Cytoplasmic-facing; it reads SCQHCQRQSQ…SPGQRCFPNS (94 aa).

This sequence belongs to the semaphorin family. As to expression, in adult, only detected in brain.

It is found in the membrane. Its function is as follows. May act as a positive axonal guidance cue. In Mus musculus (Mouse), this protein is Semaphorin-5B (Sema5b).